Consider the following 55-residue polypeptide: ATP synthase F(0) complex subunit 8 (55 aa).

Residues 7-24 form a helical membrane-spanning segment; the sequence is NPWFYIMLMSWLTFSLII. The disordered stretch occupies residues 35–55; that stretch reads NPPSNKTSTTTRTLPWTWPWT. The segment covering 41-55 has biased composition (low complexity); sequence TSTTTRTLPWTWPWT.

The protein belongs to the ATPase protein 8 family. In terms of assembly, component of the ATP synthase complex composed at least of ATP5F1A/subunit alpha, ATP5F1B/subunit beta, ATP5MC1/subunit c (homooctomer), MT-ATP6/subunit a, MT-ATP8/subunit 8, ATP5ME/subunit e, ATP5MF/subunit f, ATP5MG/subunit g, ATP5MK/subunit k, ATP5MJ/subunit j, ATP5F1C/subunit gamma, ATP5F1D/subunit delta, ATP5F1E/subunit epsilon, ATP5PF/subunit F6, ATP5PB/subunit b, ATP5PD/subunit d, ATP5PO/subunit OSCP. ATP synthase complex consists of a soluble F(1) head domain (subunits alpha(3) and beta(3)) - the catalytic core - and a membrane F(0) domain - the membrane proton channel (subunits c, a, 8, e, f, g, k and j). These two domains are linked by a central stalk (subunits gamma, delta, and epsilon) rotating inside the F1 region and a stationary peripheral stalk (subunits F6, b, d, and OSCP).

It localises to the mitochondrion membrane. Its function is as follows. Subunit 8, of the mitochondrial membrane ATP synthase complex (F(1)F(0) ATP synthase or Complex V) that produces ATP from ADP in the presence of a proton gradient across the membrane which is generated by electron transport complexes of the respiratory chain. ATP synthase complex consist of a soluble F(1) head domain - the catalytic core - and a membrane F(1) domain - the membrane proton channel. These two domains are linked by a central stalk rotating inside the F(1) region and a stationary peripheral stalk. During catalysis, ATP synthesis in the catalytic domain of F(1) is coupled via a rotary mechanism of the central stalk subunits to proton translocation. In vivo, can only synthesize ATP although its ATP hydrolase activity can be activated artificially in vitro. Part of the complex F(0) domain. The sequence is that of ATP synthase F(0) complex subunit 8 from Corythaixoides concolor (Grey go-away-bird).